Reading from the N-terminus, the 398-residue chain is GTP cyclohydrolase-2 (398 aa).

Residues 1–172 (MNTPTHTHPH…TAAACASTTE (172 aa)) form a unknown region. Residues 173 to 398 (YELVTRTPVP…VKPIAKTGHA (226 aa)) form a GTP cyclohydrolase II region. 220–224 (RVHSS) serves as a coordination point for GTP. Residues Cys225, Cys236, and Cys238 each coordinate Zn(2+). Residues Gln241, 263 to 265 (EGR), and Thr285 each bind GTP. Asp297 (proton acceptor) is an active-site residue. Arg299 functions as the Nucleophile in the catalytic mechanism. Ser320 and Lys325 together coordinate GTP. The disordered stretch occupies residues 375–398 (QRPQDPSETVDGETVKPIAKTGHA).

It in the C-terminal section; belongs to the GTP cyclohydrolase II family. It depends on Zn(2+) as a cofactor.

The catalysed reaction is GTP + 4 H2O = 2,5-diamino-6-hydroxy-4-(5-phosphoribosylamino)-pyrimidine + formate + 2 phosphate + 3 H(+). It participates in cofactor biosynthesis; riboflavin biosynthesis; 5-amino-6-(D-ribitylamino)uracil from GTP: step 1/4. In terms of biological role, catalyzes the conversion of GTP to 2,5-diamino-6-ribosylamino-4(3H)-pyrimidinone 5'-phosphate (DARP), formate and pyrophosphate. The chain is GTP cyclohydrolase-2 (ribA) from Xylella fastidiosa (strain Temecula1 / ATCC 700964).